A 228-amino-acid chain; its full sequence is uncharacterized protein (228 aa).

5 consecutive transmembrane segments (helical) span residues 14–34 (HTIS…MLLV), 42–62 (VALF…AITL), 130–150 (FIFS…LVGS), 156–176 (FSFD…VLFM), and 192–212 (IVIA…LIAL).

The protein belongs to the AzlC family.

It localises to the cell membrane. This is an uncharacterized protein from Helicobacter pylori (strain ATCC 700392 / 26695) (Campylobacter pylori).